The sequence spans 361 residues: MATPVVSASGPPATPAPAPVAAPASASASVPAPTPAPAAAAVPAAAPAASSDPAAAAATTAAPGQTPASAQAPAQTPAPALPGPALPGPFPGGRVVRLHPVILASIVDSYERRNEGAARVIGTLLGTVDKHSVEVTNCFSVPHNESEDEVAVDMEFAKNMYELHKKVSPNELILGWYATGHDITEHSVLIHEYYSREAPNPIHLTVDTSLQNGRMSIKAYVSTLMGVPGRTMGVMFTPLTVKYAYYDTERIGVDLIMKTCFSPNRVIGLSSDLQQVGGASARIQDALSTVLQYAEDVLSGKVSADNTVGRFLMSLVNQVPKIVPDDFETMLNSNINDLLMVTYLANLTQSQIALNEKLVNL.

Composition is skewed to low complexity over residues 1 to 11 (MATPVVSASGP) and 21 to 42 (AAPASASASVPAPTPAPAAAAV). The disordered stretch occupies residues 1–42 (MATPVVSASGPPATPAPAPVAAPASASASVPAPTPAPAAAAV). At Ala2 the chain carries N-acetylalanine. Position 50 is a phosphoserine; by CDK11; in vitro (Ser50). Positions 55 to 78 (AAAATTAAPGQTPASAQAPAQTPA) are enriched in low complexity. The segment at 55 to 86 (AAAATTAAPGQTPASAQAPAQTPAPALPGPAL) is disordered. The MPN domain occupies 96–226 (VRLHPVILAS…IKAYVSTLMG (131 aa)). At Lys242 the chain carries N6-acetyllysine. Ser262 carries the phosphoserine modification.

The protein belongs to the eIF-3 subunit F family. As to quaternary structure, component of the eukaryotic translation initiation factor 3 (eIF-3) complex, which is composed of 13 subunits: EIF3A, EIF3B, EIF3C, EIF3D, EIF3E, EIF3F, EIF3G, EIF3H, EIF3I, EIF3J, EIF3K, EIF3L and EIF3M. The eIF-3 complex appears to include 3 stable modules: module A is composed of EIF3A, EIF3B, EIF3G and EIF3I; module B is composed of EIF3F, EIF3H, and EIF3M; and module C is composed of EIF3C, EIF3D, EIF3E, EIF3K and EIF3L. EIF3C of module C binds EIF3B of module A and EIF3H of module B, thereby linking the three modules. EIF3J is a labile subunit that binds to the eIF-3 complex via EIF3B. The eIF-3 complex interacts with RPS6KB1 under conditions of nutrient depletion. Mitogenic stimulation leads to binding and activation of a complex composed of MTOR and RPTOR, leading to phosphorylation and release of RPS6KB1 and binding of EIF4B to eIF-3. Interacts with RNF139; the interaction leads to protein translation inhibitions in a ubiquitination-dependent manner. Interacts with DTX1, the interaction is required for deubiquitinating activity towards NOTCH1. In terms of processing, phosphorylation is enhanced upon serum stimulation. Phosphorylated during apoptosis by caspase-processed CDK11.

The protein resides in the cytoplasm. It carries out the reaction Thiol-dependent hydrolysis of ester, thioester, amide, peptide and isopeptide bonds formed by the C-terminal Gly of ubiquitin (a 76-residue protein attached to proteins as an intracellular targeting signal).. Component of the eukaryotic translation initiation factor 3 (eIF-3) complex, which is required for several steps in the initiation of protein synthesis. The eIF-3 complex associates with the 40S ribosome and facilitates the recruitment of eIF-1, eIF-1A, eIF-2:GTP:methionyl-tRNAi and eIF-5 to form the 43S pre-initiation complex (43S PIC). The eIF-3 complex stimulates mRNA recruitment to the 43S PIC and scanning of the mRNA for AUG recognition. The eIF-3 complex is also required for disassembly and recycling of post-termination ribosomal complexes and subsequently prevents premature joining of the 40S and 60S ribosomal subunits prior to initiation. The eIF-3 complex specifically targets and initiates translation of a subset of mRNAs involved in cell proliferation, including cell cycling, differentiation and apoptosis, and uses different modes of RNA stem-loop binding to exert either translational activation or repression. Functionally, deubiquitinates activated NOTCH1, promoting its nuclear import, thereby acting as a positive regulator of Notch signaling. This chain is Eukaryotic translation initiation factor 3 subunit F, found in Macaca fascicularis (Crab-eating macaque).